A 257-amino-acid polypeptide reads, in one-letter code: NAD kinase (257 aa).

Asp46 acts as the Proton acceptor in catalysis. NAD(+) is bound by residues Asp46–Gly47, Asn116–Glu117, Asp146, Ala154, Thr157–Ser162, and Asn218.

The protein belongs to the NAD kinase family. A divalent metal cation is required as a cofactor.

It is found in the cytoplasm. The catalysed reaction is NAD(+) + ATP = ADP + NADP(+) + H(+). Involved in the regulation of the intracellular balance of NAD and NADP, and is a key enzyme in the biosynthesis of NADP. Catalyzes specifically the phosphorylation on 2'-hydroxyl of the adenosine moiety of NAD to yield NADP. In Brucella suis biovar 1 (strain 1330), this protein is NAD kinase.